Consider the following 368-residue polypeptide: GTPase Obg (368 aa).

In terms of domain architecture, Obg spans 1-159; sequence MQFIDQAEIE…RQLRLELKLL (159 aa). Positions 160–328 constitute an OBG-type G domain; the sequence is AEVGIIGLPN…LMQLVWQWLD (169 aa). Residues 166–173, 191–195, 213–216, 280–283, and 309–311 contribute to the GTP site; these read GLPNAGKS, FTTLV, DIPG, NKID, and SAA. Positions 173 and 193 each coordinate Mg(2+).

This sequence belongs to the TRAFAC class OBG-HflX-like GTPase superfamily. OBG GTPase family. In terms of assembly, monomer. Requires Mg(2+) as cofactor.

Its subcellular location is the cytoplasm. Its function is as follows. An essential GTPase which binds GTP, GDP and possibly (p)ppGpp with moderate affinity, with high nucleotide exchange rates and a fairly low GTP hydrolysis rate. Plays a role in control of the cell cycle, stress response, ribosome biogenesis and in those bacteria that undergo differentiation, in morphogenesis control. The polypeptide is GTPase Obg (Synechocystis sp. (strain ATCC 27184 / PCC 6803 / Kazusa)).